The following is a 656-amino-acid chain: Chromosomal replication initiator protein DnaA (656 aa).

Residues 1 to 100 form a domain I, interacts with DnaA modulators region; that stretch reads MADVPADLAA…TAGEPAGPAP (100 aa). The disordered stretch occupies residues 91–313; sequence TAGEPAGPAP…PAPATGPGEP (223 aa). Pro residues predominate over residues 97–109; that stretch reads GPAPQAPQSPPSR. The interval 101–315 is domain II; sequence QAPQSPPSRP…PATGPGEPTA (215 aa). Composition is skewed to basic and acidic residues over residues 126 to 144 and 231 to 273; these read GREEYRDRDEYEGYGRNRA and QRGD…RDLP. A compositionally biased stretch (low complexity) spans 291 to 313; the sequence is GPATGAPGPLAAQPAPATGPGEP. Residues 316-532 are domain III, AAA+ region; the sequence is RLNPKYLFDT…GALIRVTAFA (217 aa). ATP is bound by residues Gly-360, Gly-362, Lys-363, and Thr-364. The tract at residues 533-656 is domain IV, binds dsDNA; it reads SLNRQPVDLG…TELTNRIKNG (124 aa).

This sequence belongs to the DnaA family. Oligomerizes as a right-handed, spiral filament on DNA at oriC.

It is found in the cytoplasm. Functionally, plays an essential role in the initiation and regulation of chromosomal replication. ATP-DnaA binds to the origin of replication (oriC) to initiate formation of the DNA replication initiation complex once per cell cycle. Binds the DnaA box (a 9 base pair repeat at the origin) and separates the double-stranded (ds)DNA. Forms a right-handed helical filament on oriC DNA; dsDNA binds to the exterior of the filament while single-stranded (ss)DNA is stabiized in the filament's interior. The ATP-DnaA-oriC complex binds and stabilizes one strand of the AT-rich DNA unwinding element (DUE), permitting loading of DNA polymerase. After initiation quickly degrades to an ADP-DnaA complex that is not apt for DNA replication. Binds acidic phospholipids. The sequence is that of Chromosomal replication initiator protein DnaA from Streptomyces coelicolor (strain ATCC BAA-471 / A3(2) / M145).